We begin with the raw amino-acid sequence, 414 residues long: S-adenosylmethionine synthase (414 aa).

Residue H11 participates in ATP binding. D13 is a Mg(2+) binding site. Residue E39 coordinates K(+). Residues E52 and Q95 each contribute to the L-methionine site. A flexible loop region spans residues Q95–L105. ATP is bound by residues D169 to K171, K245 to F246, D254, R260 to K261, A277, and K281. D254 serves as a coordination point for L-methionine. K285 lines the L-methionine pocket.

The protein belongs to the AdoMet synthase family. In terms of assembly, homotetramer; dimer of dimers. Mg(2+) serves as cofactor. The cofactor is K(+).

It localises to the cytoplasm. The enzyme catalyses L-methionine + ATP + H2O = S-adenosyl-L-methionine + phosphate + diphosphate. Its pathway is amino-acid biosynthesis; S-adenosyl-L-methionine biosynthesis; S-adenosyl-L-methionine from L-methionine: step 1/1. Catalyzes the formation of S-adenosylmethionine (AdoMet) from methionine and ATP. The overall synthetic reaction is composed of two sequential steps, AdoMet formation and the subsequent tripolyphosphate hydrolysis which occurs prior to release of AdoMet from the enzyme. The sequence is that of S-adenosylmethionine synthase from Synechococcus sp. (strain JA-3-3Ab) (Cyanobacteria bacterium Yellowstone A-Prime).